The primary structure comprises 718 residues: Sodium/myo-inositol cotransporter (718 aa).

The Extracellular segment spans residues 1 to 9; it reads MRAVLETAD. The chain crosses the membrane as a helical span at residues 10-29; that stretch reads IAIVALYFILVMCIGFFAMW. The Cytoplasmic portion of the chain corresponds to 30–38; it reads KSNRSTVSG. Residues 39-57 traverse the membrane as a helical segment; the sequence is YFLAGRSMTWVAIGASLFV. Residues 58 to 86 lie on the Extracellular side of the membrane; that stretch reads SNIGSEHFIGLAGSGAASGFAVGAWEFNA. A helical membrane pass occupies residues 87 to 110; that stretch reads LLLLQLLGWVFIPIYIRSGVYTMP. Over 111–123 the chain is Cytoplasmic; the sequence is EYLSKRFGGHRIQ. A helical transmembrane segment spans residues 124–144; it reads VYFAALSLILYIFTKLSVDLY. Residues 145 to 157 lie on the Extracellular side of the membrane; it reads SGALFIQESLGWN. The chain crosses the membrane as a helical span at residues 158 to 183; it reads LYVSVILLIGMTALLTVTGGLVAVIY. Residues 184-186 are Cytoplasmic-facing; the sequence is TDT. A helical transmembrane segment spans residues 187–205; the sequence is LQALLMIVGALTLMIISMM. The Extracellular segment spans residues 206-303; the sequence is EIGGFEEVKR…HAKGSTLMAG (98 aa). The N-linked (GlcNAc...) asparagine glycan is linked to N232. The helical transmembrane segment at 304–324 threads the bilayer; sequence FLKLLPMFIIVVPGMISRILF. Residues 325–353 are Cytoplasmic-facing; the sequence is ADDIACINPEHCMQVCGSRAGCSNIAYPR. A helical transmembrane segment spans residues 354 to 376; that stretch reads LVMKLVPVGLRGLMMAVMIAALM. Topologically, residues 377 to 406 are extracellular; that stretch reads SDLDSIFNSASTIFTLDVYKLIRRSASSRE. Residues 407–430 form a helical membrane-spanning segment; that stretch reads LMIVGRIFVAFMVVISIAWVPIIV. Residues 431–443 are Cytoplasmic-facing; the sequence is EMQGGQMYLYIQE. The helical transmembrane segment at 444 to 462 threads the bilayer; the sequence is VADYLTPPVAALFLLAIFW. At 463–510 the chain is on the extracellular side; the sequence is KRCNEQGAFYGGMAGFVLGAVRLTLAFAYRAPECDQPDNRPGFIKDIH. Residues 511–532 form a helical membrane-spanning segment; it reads YMYVATALFWVTGLITVIVSLL. Over 533–695 the chain is Cytoplasmic; it reads TPPPTKEQIR…QMLEEPPQVK (163 aa). 2 positions are modified to phosphoserine: S594 and S632. A helical transmembrane segment spans residues 696-716; it reads LILNIGLFAVCSLGIFMFVYF. The Extracellular segment spans residues 717-718; sequence SL.

The protein belongs to the sodium:solute symporter (SSF) (TC 2.A.21) family. As to quaternary structure, interacts with KCNQ2 (via the pore module). Interacts with KCNQ1; this interaction is direct. Forms coregulatory complexes with ion channels KCNQ2-KCNQ3 and KCNQ1-KCNE2. In terms of tissue distribution, kidney cortex and medulla.

It localises to the apical cell membrane. The protein localises to the basolateral cell membrane. It catalyses the reaction myo-inositol(out) + 2 Na(+)(out) = myo-inositol(in) + 2 Na(+)(in). It carries out the reaction scyllo-inositol(out) + 2 Na(+)(out) = scyllo-inositol(in) + 2 Na(+)(in). With respect to regulation, inhibited by phlorizin and phloretin. In terms of biological role, electrogenic Na(+)-coupled sugar symporter that actively transports myo-inositol and its stereoisomer scyllo-inositol across the plasma membrane, with a Na(+) to sugar coupling ratio of 2:1. Maintains myo-inositol concentration gradient that defines cell volume and fluid balance during osmotic stress, in particular in the fetoplacental unit and central nervous system. Forms coregulatory complexes with voltage-gated K(+) ion channels, allosterically altering ion selectivity, voltage dependence and gating kinetics of the channel. In turn, K(+) efflux through the channel forms a local electrical gradient that modulates electrogenic Na(+)-coupled myo-inositol influx through the transporter. Associates with KCNQ1-KCNE2 channel in the apical membrane of choroid plexus epithelium and regulates the myo-inositol gradient between blood and cerebrospinal fluid with an impact on neuron excitability. Associates with KCNQ2-KCNQ3 channel altering ion selectivity, increasing Na(+) and Cs(+) permeation relative to K(+) permeation. Provides myo-inositol precursor for biosynthesis of phosphoinositides such as PI(4,5)P2, thus indirectly affecting the activity of phosphoinositide-dependent ion channels and Ca(2+) signaling upon osmotic stress. Has very low affinity for sugars such as L-fucose and L-xylose, with an affinity about three orders of magnitude lower than myo-inositol. In Canis lupus familiaris (Dog), this protein is Sodium/myo-inositol cotransporter (SLC5A3).